The following is a 126-amino-acid chain: Nascent polypeptide-associated complex protein (126 aa).

The NAC-A/B domain occupies proline 10 to lysine 77.

The protein belongs to the NAC-alpha family. In terms of assembly, homodimer. Interacts with the ribosome. Binds ribosomal RNA.

Functionally, contacts the emerging nascent chain on the ribosome. This is Nascent polypeptide-associated complex protein from Methanococcus maripaludis (strain C6 / ATCC BAA-1332).